The following is a 262-amino-acid chain: Indole-3-glycerol phosphate synthase (262 aa).

The protein belongs to the TrpC family.

The catalysed reaction is 1-(2-carboxyphenylamino)-1-deoxy-D-ribulose 5-phosphate + H(+) = (1S,2R)-1-C-(indol-3-yl)glycerol 3-phosphate + CO2 + H2O. It functions in the pathway amino-acid biosynthesis; L-tryptophan biosynthesis; L-tryptophan from chorismate: step 4/5. This is Indole-3-glycerol phosphate synthase from Dechloromonas aromatica (strain RCB).